Here is a 183-residue protein sequence, read N- to C-terminus: Ferredoxin-2, mitochondrial (183 aa).

A mitochondrion-targeting transit peptide spans Met1 to Pro52. The region spanning Val68 to Thr170 is the 2Fe-2S ferredoxin-type domain. [2Fe-2S] cluster contacts are provided by Cys105, Cys111, Cys114, and Cys151.

This sequence belongs to the adrenodoxin/putidaredoxin family. As to quaternary structure, component of the mitochondrial core iron-sulfur cluster (ISC) complex composed of NFS1, LYRM4, NDUFAB1, ISCU, FXN, and FDX2; this complex is a heterohexamer containing two copies of each monomer. Form a heterodimer complex with NFS1. Interacts (in both their reduced and oxidized states) with the cysteine desulfurase (NFS1:LYRM4) complex; this interaction stimulates cysteine desulfurase activity, and serves as a reductant for Fe-S cluster assembly. [2Fe-2S] cluster is required as a cofactor.

The protein resides in the mitochondrion. Its subcellular location is the mitochondrion matrix. In terms of biological role, electron donor, of the core iron-sulfur cluster (ISC) assembly complex, that acts to reduce the persulfide into sulfide during [2Fe-2S] clusters assembly on the scaffolding protein ISCU. The core iron-sulfur cluster (ISC) assembly complex is involved in the de novo synthesis of a [2Fe-2S] cluster, the first step of the mitochondrial iron-sulfur protein biogenesis. This process is initiated by the cysteine desulfurase complex (NFS1:LYRM4:NDUFAB1) that produces persulfide which is delivered on the scaffold protein ISCU in a FXN-dependent manner. Then this complex is stabilized by FDX2 which provides reducing equivalents to accomplish the [2Fe-2S] cluster assembly. Finally, the [2Fe-2S] cluster is transferred from ISCU to chaperone proteins, including HSCB, HSPA9 and GLRX5. Essential for coenzyme Q biosynthesis: together with FDXR, transfers the electrons required for the hydroxylation reaction performed by COQ6. The sequence is that of Ferredoxin-2, mitochondrial from Bos taurus (Bovine).